We begin with the raw amino-acid sequence, 274 residues long: Large ribosomal subunit protein uL2 (274 aa).

2 disordered regions span residues 34–54 (LEKKSKSGGRNNNGRITTRHI) and 224–261 (VAMNPVDHPHGGGEGRTSGGRHPVSPWGFPTKGAKTRA).

This sequence belongs to the universal ribosomal protein uL2 family. Part of the 50S ribosomal subunit. Forms a bridge to the 30S subunit in the 70S ribosome.

Functionally, one of the primary rRNA binding proteins. Required for association of the 30S and 50S subunits to form the 70S ribosome, for tRNA binding and peptide bond formation. It has been suggested to have peptidyltransferase activity; this is somewhat controversial. Makes several contacts with the 16S rRNA in the 70S ribosome. This Ectopseudomonas mendocina (strain ymp) (Pseudomonas mendocina) protein is Large ribosomal subunit protein uL2.